The following is a 100-amino-acid chain: MEQINIEIAYAYPHNHYLKSFTLDAGTTVQSAILQSGILAQYTDIDLRKNKIGIFARPVKLTDVLKNGDRIEIYRPLLADPKEIRRKRAAQQAARQKGKI.

Belongs to the UPF0125 (RnfH) family.

The sequence is that of Protein RnfH from Actinobacillus succinogenes (strain ATCC 55618 / DSM 22257 / CCUG 43843 / 130Z).